We begin with the raw amino-acid sequence, 237 residues long: Immunoglobulin superfamily member 6 (237 aa).

An N-terminal signal peptide occupies residues 1–27 (MGPVSARRSRLRPEISLILFQVGMVGA). The Extracellular portion of the chain corresponds to 28-152 (CTVYVLQPGY…ERLFSKEVRS (125 aa)). The 105-residue stretch at 30 to 134 (VYVLQPGYLE…ELSPSAKHVG (105 aa)) folds into the Ig-like C2-type domain. A disulfide bridge connects residues Cys-51 and Cys-118. The helical transmembrane segment at 153 to 173 (FLIVLLALLSVYITGVCVTFI) threads the bilayer. At 174-237 (VLFKSKSNGP…RKALPNPGRA (64 aa)) the chain is on the cytoplasmic side. Residues 215–229 (TSHLPEQEGTDENRK) are compositionally biased toward basic and acidic residues. Residues 215–237 (TSHLPEQEGTDENRKALPNPGRA) form a disordered region.

Ubiquitous with higher expression in immune tissue.

Its subcellular location is the membrane. The chain is Immunoglobulin superfamily member 6 (Igsf6) from Mus musculus (Mouse).